Here is a 391-residue protein sequence, read N- to C-terminus: Formate-dependent phosphoribosylglycinamide formyltransferase (391 aa).

N(1)-(5-phospho-beta-D-ribosyl)glycinamide contacts are provided by residues 20-21 (EL) and Glu80. ATP is bound by residues Arg112, Lys153, 158 to 163 (SSGKGQ), 193 to 196 (EGFI), and Glu201. Residues 117 to 306 (RLAAEELDLS…EFALHVRAFT (190 aa)) form the ATP-grasp domain. Mg(2+) contacts are provided by Glu265 and Glu277. N(1)-(5-phospho-beta-D-ribosyl)glycinamide-binding positions include Asp284, Lys354, and 361-362 (RR).

Belongs to the PurK/PurT family. Homodimer.

The catalysed reaction is N(1)-(5-phospho-beta-D-ribosyl)glycinamide + formate + ATP = N(2)-formyl-N(1)-(5-phospho-beta-D-ribosyl)glycinamide + ADP + phosphate + H(+). It participates in purine metabolism; IMP biosynthesis via de novo pathway; N(2)-formyl-N(1)-(5-phospho-D-ribosyl)glycinamide from N(1)-(5-phospho-D-ribosyl)glycinamide (formate route): step 1/1. In terms of biological role, involved in the de novo purine biosynthesis. Catalyzes the transfer of formate to 5-phospho-ribosyl-glycinamide (GAR), producing 5-phospho-ribosyl-N-formylglycinamide (FGAR). Formate is provided by PurU via hydrolysis of 10-formyl-tetrahydrofolate. The protein is Formate-dependent phosphoribosylglycinamide formyltransferase of Vibrio parahaemolyticus serotype O3:K6 (strain RIMD 2210633).